A 280-amino-acid polypeptide reads, in one-letter code: Orotidine 5'-phosphate decarboxylase (280 aa).

The active-site Proton donor is Lys97.

The protein belongs to the OMP decarboxylase family. Type 2 subfamily.

It carries out the reaction orotidine 5'-phosphate + H(+) = UMP + CO2. The protein operates within pyrimidine metabolism; UMP biosynthesis via de novo pathway; UMP from orotate: step 2/2. In Corynebacterium efficiens (strain DSM 44549 / YS-314 / AJ 12310 / JCM 11189 / NBRC 100395), this protein is Orotidine 5'-phosphate decarboxylase (pyrF).